Here is an 809-residue protein sequence, read N- to C-terminus: Cell division control protein 48 homolog A (809 aa).

S2 carries the post-translational modification N-acetylserine. A Phosphoserine modification is found at S41. Residues G210, 248–256 (GPPGSGKTL), and H387 each bind ADP. Position 521-529 (521-529 (GPPGCGKTL)) interacts with ATP. The disordered stretch occupies residues 782 to 809 (AGSGATTGVADPFATSAAAAGDDDDLYN). The segment covering 791–801 (ADPFATSAAAA) has biased composition (low complexity).

The protein belongs to the AAA ATPase family. In terms of assembly, homohexamer. Interacts with SERK1, GRF6, KAPP and SYP31, but not with KNOLLE. Component of the SERK1 signaling complex, composed of KAPP, CDC48A, GRF6 or GRF7, SERK1, SERK2, SERK3/BAK1 and BRI1. Interacts with PUX1, PUX2, PUX3, PUX4, PUX5, PUX7 and PUX11 via its N-terminus. Post-translationally, phosphorylated on at least one threonine residue and on Ser-41 by SERK1.

It is found in the nucleus. Its subcellular location is the cytoplasm. The protein localises to the cytoskeleton. It localises to the phragmoplast. The protein resides in the cell membrane. In terms of biological role, probably functions in cell division and growth processes. Interacts with certain SNAREs as part of specialized membrane fusion events where vesicles from the same organelle fuse (homotypic fusion). The chain is Cell division control protein 48 homolog A (CDC48A) from Arabidopsis thaliana (Mouse-ear cress).